The primary structure comprises 37 residues: Conotoxin Bt1.8 (37 aa).

The propeptide occupies 1–20; sequence PDGRNAAAKAFDLITPTVRK. Cystine bridges form between Cys22–Cys28 and Cys23–Cys36. At Cys36 the chain carries Cysteine amide.

Belongs to the conotoxin A superfamily. In terms of tissue distribution, expressed by the venom duct.

It is found in the secreted. Alpha-conotoxins bind to the nicotinic acetylcholine receptors (nAChR) and inhibit them. This toxin inhibits mammalian alpha-3-beta-2/CHRNA3-CHRNB2 nAChR (IC(50)=9.4 nM (rat), IC(50)=8.8 nM (human)), as well as the subunit chimera alpha-6/alpha-3-beta-2-beta-3 nAChR (CHRNA6/CHRNA3-CHRNB2-CHRNB3)(IC(50)=2.1 nM (rat), IC(50)=1.7 nM (human)). Binds to rat alpha-6/alpha-3-beta-2-beta-3 more rapidly than to alpha-3-beta-2, and dissociates more rapidly from alpha-3-beta-2 than from alpha-6/alpha-3-beta-2-beta-3. The sequence is that of Conotoxin Bt1.8 from Conus betulinus (Beech cone).